A 268-amino-acid polypeptide reads, in one-letter code: Ribosomal RNA small subunit methyltransferase A (268 aa).

The S-adenosyl-L-methionine site is built by Asn-23, Ile-25, Gly-50, Glu-72, Asp-97, and Asn-116.

This sequence belongs to the class I-like SAM-binding methyltransferase superfamily. rRNA adenine N(6)-methyltransferase family. RsmA subfamily.

The protein resides in the cytoplasm. It catalyses the reaction adenosine(1518)/adenosine(1519) in 16S rRNA + 4 S-adenosyl-L-methionine = N(6)-dimethyladenosine(1518)/N(6)-dimethyladenosine(1519) in 16S rRNA + 4 S-adenosyl-L-homocysteine + 4 H(+). Specifically dimethylates two adjacent adenosines (A1518 and A1519) in the loop of a conserved hairpin near the 3'-end of 16S rRNA in the 30S particle. May play a critical role in biogenesis of 30S subunits. The protein is Ribosomal RNA small subunit methyltransferase A of Rickettsia bellii (strain OSU 85-389).